A 700-amino-acid chain; its full sequence is Calpain-2 catalytic subunit (700 aa).

Residue A2 is modified to N-acetylalanine. The propeptide at 2–19 (AGIAIKLAKDREAAEGLG) is anchors to the small subunit. In terms of domain architecture, Calpain catalytic spans 45 to 344 (LFQDPSFPAL…YSRLEICNLT (300 aa)). Residues I89, G91, and D96 each coordinate Ca(2+). C105 is an active-site residue. Residues E175, Q229, and K230 each coordinate Ca(2+). Catalysis depends on residues H262 and N286. The Ca(2+) site is built by E292, D299, Q319, and E323. A domain III region spans residues 345-514 (PDTLTCDSYK…KKADYQAVDD (170 aa)). Residues 515-529 (EIEANIEEIDANEED) form a linker region. The segment at 530 to 700 (IDDGFRRLFV…LASWLSFSVL (171 aa)) is domain IV. 16 residues coordinate Ca(2+): A542, D545, E547, E552, D585, D587, S589, K591, E596, D615, D617, S619, T621, E626, D658, and N661. 2 consecutive EF-hand domains span residues 572 to 605 (FSIE…TKIQ) and 602 to 637 (TKIQ…AGFK).

This sequence belongs to the peptidase C2 family. Forms a heterodimer with a small (regulatory) subunit (CAPNS1). Interacts with CPEB3; this leads to cleavage of CPEB3. It depends on Ca(2+) as a cofactor. Ubiquitous.

It is found in the cytoplasm. The protein resides in the cell membrane. It carries out the reaction Broad endopeptidase specificity.. Its activity is regulated as follows. Activated by 200-1000 micromolar concentrations of calcium and inhibited by calpastatin. Its function is as follows. Calcium-regulated non-lysosomal thiol-protease which catalyzes limited proteolysis of substrates involved in cytoskeletal remodeling and signal transduction. Proteolytically cleaves MYOC at 'Arg-226'. Proteolytically cleaves CPEB3 following neuronal stimulation which abolishes CPEB3 translational repressor activity, leading to translation of CPEB3 target mRNAs. The sequence is that of Calpain-2 catalytic subunit (Capn2) from Mus musculus (Mouse).